The primary structure comprises 459 residues: Alpha,alpha-trehalose-phosphate synthase [UDP-forming] (459 aa).

D-glucose 6-phosphate is bound by residues Tyr-86 and Asp-140. UDP-binding residues include Arg-262 and Lys-267. Arg-262 and Lys-267 together coordinate UDP-alpha-D-glucose. Arg-300 lines the D-glucose 6-phosphate pocket. 361–369 contributes to the UDP-alpha-D-glucose binding site; it reads DGMNLVALE. Residue 365–369 participates in UDP binding; that stretch reads LVALE.

Belongs to the glycosyltransferase 20 family. Component of the trehalose synthase complex.

It is found in the cytoplasm. The catalysed reaction is D-glucose 6-phosphate + UDP-alpha-D-glucose = alpha,alpha-trehalose 6-phosphate + UDP + H(+). In terms of biological role, synthase catalytic subunit of the trehalose synthase complex that catalyzes the production of trehalose from glucose-6-phosphate and UDP-alpha-D-glucose in a two step process. Can function independently of the complex. The polypeptide is Alpha,alpha-trehalose-phosphate synthase [UDP-forming] (TPS1) (Encephalitozoon cuniculi (strain GB-M1) (Microsporidian parasite)).